Reading from the N-terminus, the 421-residue chain is MPIPWVEKYRPKSFSEIVNQEEAKQILASWICTRFKAPQEFCARWAKRRDKEIKEARAVLLWGPPGIGKTTLVHALAKEIGYELVELNASDVRTGERIRQVVGRGLREASLFGYAGKIVLFDEVDGLHVKEDLGGLEAILNLIETAKVPIVLTANNPFDPKLRPLRDISLVVGLKRLSEDEVVEVLKRICASEGAKCEEEALRSLAKSSYGDLRAAINDLQLYLAGRKVLTVDDIKRAGERNPQLSMFEILDRVYKARWFDEARAVSFNPSFDWEQYFVWALETIPIVYKDLEVMSEAFDRLSKADMFIGIVKRTQEWELLSYAMELALGGVSQVKNKPRLPPFIRYGFPQRLLLLAKSKEARRRREMVVEYLARNLHVSKGLVNAEIFYVLSALAKKDDHVVERLARALGISPIDIKNLL.

63–70 (GPPGIGKT) contributes to the ATP binding site.

This sequence belongs to the activator 1 small subunits family. RfcL subfamily. As to quaternary structure, heteromultimer composed of small subunits (RfcS) and large subunits (RfcL).

In terms of biological role, part of the RFC clamp loader complex which loads the PCNA sliding clamp onto DNA. This Pyrobaculum calidifontis (strain DSM 21063 / JCM 11548 / VA1) protein is Replication factor C large subunit.